The primary structure comprises 454 residues: Uridine kinase (454 aa).

An ATP-binding site is contributed by 28 to 35; the sequence is GPSGSGKT.

This sequence belongs to the uridine kinase family.

It localises to the cytoplasm. The protein resides in the nucleus. It catalyses the reaction uridine + ATP = UMP + ADP + H(+). The catalysed reaction is cytidine + ATP = CMP + ADP + H(+). Its pathway is pyrimidine metabolism; CTP biosynthesis via salvage pathway; CTP from cytidine: step 1/3. The protein operates within pyrimidine metabolism; UMP biosynthesis via salvage pathway; UMP from uridine: step 1/1. In terms of biological role, catalyzes the conversion of uridine into UMP and cytidine into CMP in the pyrimidine salvage pathway. In Schizosaccharomyces pombe (strain 972 / ATCC 24843) (Fission yeast), this protein is Uridine kinase (urk1).